A 2055-amino-acid chain; its full sequence is Citron rho-interacting kinase (2055 aa).

Residues 97-359 enclose the Protein kinase domain; sequence FEVRSLVGCG…FEGLCCHPFF (263 aa). ATP contacts are provided by residues 103-111 and lysine 126; that span reads VGCGHFAEV. Catalysis depends on aspartate 221, which acts as the Proton acceptor. The 71-residue stretch at 360–430 folds into the AGC-kinase C-terminal domain; that stretch reads ARTDWNNIRN…SKALGYLGRS (71 aa). The segment at 375 to 398 is disordered; it reads VPTLKSDDDTSNFDEPEKNSWVSS. Coiled-coil stretches lie at residues 457–747, 773–1238, and 1284–1318; these read LQDS…AQVS, IKKD…LEYQ, and YNELKLALEKEKARCAELEEALQKTRIELRSAREE. A disordered region spans residues 1349-1376; it reads PEHQPSAMSLLAPPSSRRKEASTPEEFS. The segment covering 1353–1363 has biased composition (low complexity); sequence PSAMSLLAPPS. Positions 1365 to 1376 are enriched in basic and acidic residues; the sequence is RRKEASTPEEFS. The segment at 1388–1437 adopts a Phorbol-ester/DAG-type zinc-finger fold; the sequence is PHRFNVGLNMRATKCAVCLDTVHFGRQASKCLECQVMCHPKCSTCLPATC. The PH domain maps to 1469–1589; sequence SLHLEGWMKV…WVTALESVVA (121 aa). One can recognise a CNH domain in the interval 1617–1907; it reads RLDMNCTLPF…RYLGPAISSG (291 aa). Positions 1932–2040 are disordered; it reads SGTEQHRVPS…RGRLPAGAVR (109 aa). Over residues 1939 to 1948 the composition is skewed to polar residues; the sequence is VPSTSRSSPN. The span at 1974–2031 shows a compositional bias: basic and acidic residues; the sequence is SHPREPSTPHRYRDREGRTELRRDKSPGRPLEREKSPGRMLSTRRERSPGRLFEDSSR.

This sequence belongs to the protein kinase superfamily. AGC Ser/Thr protein kinase family. In terms of assembly, homodimer. Directly interacts with KIF14 depending on the activation state (stronger interaction with the kinase-dead form). Interacts with TTC3.

It is found in the cytoplasm. The catalysed reaction is L-seryl-[protein] + ATP = O-phospho-L-seryl-[protein] + ADP + H(+). It carries out the reaction L-threonyl-[protein] + ATP = O-phospho-L-threonyl-[protein] + ADP + H(+). Its function is as follows. Plays a role in cytokinesis. Required for KIF14 localization to the central spindle and midbody. Putative RHO/RAC effector that binds to the GTP-bound forms of RHO and RAC1. It probably binds p21 with a tighter specificity in vivo. Displays serine/threonine protein kinase activity. Plays an important role in the regulation of cytokinesis and the development of the central nervous system. Phosphorylates MYL9/MLC2. The polypeptide is Citron rho-interacting kinase (Rattus norvegicus (Rat)).